A 494-amino-acid polypeptide reads, in one-letter code: GTPase Der (494 aa).

EngA-type G domains lie at 3-166 and 208-381; these read PVVA…VGEK and IKLA…ECAT. GTP is bound by residues 9–16, 56–60, 118–121, 214–221, 261–265, and 326–329; these read GRPNVGKS, DTGGI, NKTD, DTAGV, and NKWD. Positions 382-466 constitute a KH-like domain; it reads RRVNTSMLTK…PIRIQFKEGE (85 aa).

It belongs to the TRAFAC class TrmE-Era-EngA-EngB-Septin-like GTPase superfamily. EngA (Der) GTPase family. Associates with the 50S ribosomal subunit.

In terms of biological role, GTPase that plays an essential role in the late steps of ribosome biogenesis. This chain is GTPase Der, found in Serratia proteamaculans (strain 568).